Reading from the N-terminus, the 554-residue chain is Glucose-6-phosphate isomerase (554 aa).

Glu-359 (proton donor) is an active-site residue. Catalysis depends on residues His-390 and Lys-518.

This sequence belongs to the GPI family.

The protein localises to the cytoplasm. The enzyme catalyses alpha-D-glucose 6-phosphate = beta-D-fructose 6-phosphate. Its pathway is carbohydrate biosynthesis; gluconeogenesis. It functions in the pathway carbohydrate degradation; glycolysis; D-glyceraldehyde 3-phosphate and glycerone phosphate from D-glucose: step 2/4. In terms of biological role, catalyzes the reversible isomerization of glucose-6-phosphate to fructose-6-phosphate. The protein is Glucose-6-phosphate isomerase of Pseudomonas fluorescens (strain Pf0-1).